A 197-amino-acid chain; its full sequence is Imidazoleglycerol-phosphate dehydratase (197 aa).

It belongs to the imidazoleglycerol-phosphate dehydratase family.

It localises to the cytoplasm. It carries out the reaction D-erythro-1-(imidazol-4-yl)glycerol 3-phosphate = 3-(imidazol-4-yl)-2-oxopropyl phosphate + H2O. It participates in amino-acid biosynthesis; L-histidine biosynthesis; L-histidine from 5-phospho-alpha-D-ribose 1-diphosphate: step 6/9. This is Imidazoleglycerol-phosphate dehydratase from Bradyrhizobium diazoefficiens (strain JCM 10833 / BCRC 13528 / IAM 13628 / NBRC 14792 / USDA 110).